The sequence spans 208 residues: Small ribosomal subunit protein uS4 (208 aa).

The region spanning Thr-97–Leu-160 is the S4 RNA-binding domain.

It belongs to the universal ribosomal protein uS4 family. As to quaternary structure, part of the 30S ribosomal subunit. Contacts protein S5. The interaction surface between S4 and S5 is involved in control of translational fidelity.

Functionally, one of the primary rRNA binding proteins, it binds directly to 16S rRNA where it nucleates assembly of the body of the 30S subunit. With S5 and S12 plays an important role in translational accuracy. This is Small ribosomal subunit protein uS4 from Xanthomonas oryzae pv. oryzae (strain MAFF 311018).